Reading from the N-terminus, the 219-residue chain is NADH-quinone oxidoreductase subunit C (219 aa).

Belongs to the complex I 30 kDa subunit family. NDH-1 is composed of 14 different subunits. Subunits NuoB, C, D, E, F, and G constitute the peripheral sector of the complex.

It localises to the cell inner membrane. It carries out the reaction a quinone + NADH + 5 H(+)(in) = a quinol + NAD(+) + 4 H(+)(out). NDH-1 shuttles electrons from NADH, via FMN and iron-sulfur (Fe-S) centers, to quinones in the respiratory chain. The immediate electron acceptor for the enzyme in this species is believed to be ubiquinone. Couples the redox reaction to proton translocation (for every two electrons transferred, four hydrogen ions are translocated across the cytoplasmic membrane), and thus conserves the redox energy in a proton gradient. In Methylorubrum populi (strain ATCC BAA-705 / NCIMB 13946 / BJ001) (Methylobacterium populi), this protein is NADH-quinone oxidoreductase subunit C.